The following is a 308-amino-acid chain: Acetyl-coenzyme A carboxylase carboxyl transferase subunit alpha (308 aa).

Residues 36–286 (ELEKEVSSVY…ESYFLKAFEE (251 aa)) enclose the CoA carboxyltransferase C-terminal domain.

Belongs to the AccA family. Acetyl-CoA carboxylase is a heterohexamer composed of biotin carboxyl carrier protein (AccB), biotin carboxylase (AccC) and two subunits each of ACCase subunit alpha (AccA) and ACCase subunit beta (AccD).

The protein resides in the cytoplasm. The enzyme catalyses N(6)-carboxybiotinyl-L-lysyl-[protein] + acetyl-CoA = N(6)-biotinyl-L-lysyl-[protein] + malonyl-CoA. Its pathway is lipid metabolism; malonyl-CoA biosynthesis; malonyl-CoA from acetyl-CoA: step 1/1. Functionally, component of the acetyl coenzyme A carboxylase (ACC) complex. First, biotin carboxylase catalyzes the carboxylation of biotin on its carrier protein (BCCP) and then the CO(2) group is transferred by the carboxyltransferase to acetyl-CoA to form malonyl-CoA. The chain is Acetyl-coenzyme A carboxylase carboxyl transferase subunit alpha from Helicobacter hepaticus (strain ATCC 51449 / 3B1).